Here is a 347-residue protein sequence, read N- to C-terminus: MLKFIQNNREATALLAIVCLFVFLGALDSQYLSVQTLTMVFSSAQILMLLAIGATMVMLTRNIDVSVGSTTGMCAVLLGVMLNAGYSLPVACLATLILGIVAGFFNGVLVAWLKIPAIVATLGTLGLYRGIMLLWTGGKWIEGLPAGLKQLSAPVFLGISAIGWFTLVLALLMAWLLAKTAFGRNFYATGDNLQGARQLGVRTEMVRIMAFSLNGGMAALAGIVFASQIGFIPNQTGTGLEMKAIAACVLGGISLLGGSGTVIGAILGAYFLTQIDSVLVLLRIPAWWNDFIAGLVLLGVLVFDGRLRCALQRNLRRQKYARFISPPTPLQAEAKTHAQQNKNKEVA.

The next 9 membrane-spanning stretches (helical) occupy residues 14-34 (LLAIVCLFVFLGALDSQYLSV), 39-59 (MVFSSAQILMLLAIGATMVML), 72-92 (GMCAVLLGVMLNAGYSLPVAC), 93-113 (LATLILGIVAGFFNGVLVAWL), 115-135 (IPAIVATLGTLGLYRGIMLLW), 155-175 (VFLGISAIGWFTLVLALLMAW), 213-233 (LNGGMAALAGIVFASQIGFIP), 249-269 (VLGGISLLGGSGTVIGAILGA), and 284-304 (IPAWWNDFIAGLVLLGVLVFD).

This sequence belongs to the binding-protein-dependent transport system permease family. AraH/RbsC subfamily. In terms of assembly, the complex is composed of two ATP-binding proteins (LsrA), two transmembrane proteins (LsrC and LsrD) and a solute-binding protein (LsrB).

It is found in the cell inner membrane. Its function is as follows. Part of the ABC transporter complex LsrABCD involved in autoinducer 2 (AI-2) import. Probably responsible for the translocation of the substrate across the membrane. In Salmonella typhi, this protein is Autoinducer 2 import system permease protein LsrC (lsrC).